The following is a 187-amino-acid chain: Elongation factor P (187 aa).

Belongs to the elongation factor P family.

Its subcellular location is the cytoplasm. Its pathway is protein biosynthesis; polypeptide chain elongation. Functionally, involved in peptide bond synthesis. Stimulates efficient translation and peptide-bond synthesis on native or reconstituted 70S ribosomes in vitro. Probably functions indirectly by altering the affinity of the ribosome for aminoacyl-tRNA, thus increasing their reactivity as acceptors for peptidyl transferase. This Nocardia farcinica (strain IFM 10152) protein is Elongation factor P.